We begin with the raw amino-acid sequence, 441 residues long: AP-2 complex subunit mu (441 aa).

In terms of domain architecture, MHD spans 174-440 (RNELFLDVIE…IGRSGLYETR (267 aa)).

Belongs to the adapter complexes medium subunit family. Adapter protein complex 2 (AP-2) is a heterotetramer composed of two large adaptins (alpha-type subunit and beta-type subunits), a medium adaptin (mu-type subunit AP50) and a small adaptin (sigma-type subunit AP17). In terms of tissue distribution, brain, heart, lung, liver, testis and spleen.

Its subcellular location is the cell membrane. The protein localises to the membrane. It is found in the coated pit. Component of the adapter complexes which link clathrin to receptors in coated vesicles. Clathrin-associated protein complexes are believed to interact with the cytoplasmic tails of membrane proteins, leading to their selection and concentration. AP50 is a subunit of the plasma membrane adapter. Essential wnt/egl-20 signaling protein that functions in wnt/egl-20-producing cells. Required for the AP-2 complex-mediated endocytosis of membrane proteins including wntless homolog mig-14 in egl-20-producing cells. During development, regulates the migration of HSN neurons and the left and right Q neuroblasts (QL and QR, respectively) and their descendants, possibly through hox gene and wnt/egl-20 gene target mab-5, and plays a role in establishing ALM and PLM neuronal cell polarity. Regulates AWB sensory neuron cilia membrane expansion during development, potentially via localization of tub-1 and PtdIns(4,5)P2 to the ciliary base. Required for the asymmetric divisions of V5 cells. In Caenorhabditis elegans, this protein is AP-2 complex subunit mu (dpy-23).